Consider the following 94-residue polypeptide: Large ribosomal subunit protein uL23 (94 aa).

The protein belongs to the universal ribosomal protein uL23 family. Part of the 50S ribosomal subunit. Contacts protein L29, and trigger factor when it is bound to the ribosome.

Its function is as follows. One of the early assembly proteins it binds 23S rRNA. One of the proteins that surrounds the polypeptide exit tunnel on the outside of the ribosome. Forms the main docking site for trigger factor binding to the ribosome. This chain is Large ribosomal subunit protein uL23, found in Trichlorobacter lovleyi (strain ATCC BAA-1151 / DSM 17278 / SZ) (Geobacter lovleyi).